We begin with the raw amino-acid sequence, 446 residues long: Tripartite motif-containing protein 43C (446 aa).

The RING-type zinc finger occupies 16 to 57 (CSICQGIFMDPVYLRCGHKFCETCLLLFQEDIKFPAYCPTCR). A B box-type zinc finger spans residues 88-129 (SEEHKCVTHKAKKMIFCDKSKILLCHLCSDSQEHSGHTHCSI). Residues C93, H96, C115, and H121 each contribute to the Zn(2+) site. One can recognise a B30.2/SPRY domain in the interval 271–446 (RLRAHSIPGL…VRPFFFAAYT (176 aa)).

The protein belongs to the TRIM/RBCC family.

The polypeptide is Tripartite motif-containing protein 43C (Mus musculus (Mouse)).